A 226-amino-acid polypeptide reads, in one-letter code: X-linked lymphocyte-regulated protein 3C (226 aa).

Residues 1 to 66 (MSSRKRKATD…QARKEKQDLV (66 aa)) are disordered. Basic and acidic residues predominate over residues 8-18 (ATDTAGRHSRM). Over residues 21–30 (NLSSDDSQNP) the composition is skewed to polar residues. Basic and acidic residues-rich tracts occupy residues 39-48 (EVLDAGREDI) and 56-66 (QQARKEKQDLV). The stretch at 155–210 (ESLTLQKNRMEEFKSLCEKYLEKLEVLRDSRGNSIAEELRRLIATLEIKLLMLHNQ) forms a coiled coil.

This sequence belongs to the XLR/SYCP3 family. As to expression, expressed in lymphoid cells.

The sequence is that of X-linked lymphocyte-regulated protein 3C (Xlr3c) from Mus musculus (Mouse).